A 513-amino-acid polypeptide reads, in one-letter code: GMP synthase [glutamine-hydrolyzing] (513 aa).

The 191-residue stretch at 8 to 198 (KIIVLDYGSQ…ALNTCGAKGN (191 aa)) folds into the Glutamine amidotransferase type-1 domain. Residue cysteine 85 is the Nucleophile of the active site. Catalysis depends on residues histidine 172 and glutamate 174. Residues 199–388 (WSMENFIDMQ…LGMPDEIVWR (190 aa)) form the GMPS ATP-PPase domain. 226–232 (SGGVDSS) lines the ATP pocket.

In terms of assembly, homodimer.

The catalysed reaction is XMP + L-glutamine + ATP + H2O = GMP + L-glutamate + AMP + diphosphate + 2 H(+). Its pathway is purine metabolism; GMP biosynthesis; GMP from XMP (L-Gln route): step 1/1. Its function is as follows. Catalyzes the synthesis of GMP from XMP. This chain is GMP synthase [glutamine-hydrolyzing], found in Lactococcus lactis subsp. cremoris (strain SK11).